The chain runs to 374 residues: 4-hydroxy-3-methylbut-2-en-1-yl diphosphate synthase (flavodoxin) (374 aa).

[4Fe-4S] cluster contacts are provided by C270, C273, C305, and E312.

It belongs to the IspG family. [4Fe-4S] cluster serves as cofactor.

It catalyses the reaction (2E)-4-hydroxy-3-methylbut-2-enyl diphosphate + oxidized [flavodoxin] + H2O + 2 H(+) = 2-C-methyl-D-erythritol 2,4-cyclic diphosphate + reduced [flavodoxin]. It functions in the pathway isoprenoid biosynthesis; isopentenyl diphosphate biosynthesis via DXP pathway; isopentenyl diphosphate from 1-deoxy-D-xylulose 5-phosphate: step 5/6. Converts 2C-methyl-D-erythritol 2,4-cyclodiphosphate (ME-2,4cPP) into 1-hydroxy-2-methyl-2-(E)-butenyl 4-diphosphate. The sequence is that of 4-hydroxy-3-methylbut-2-en-1-yl diphosphate synthase (flavodoxin) from Cellvibrio japonicus (strain Ueda107) (Pseudomonas fluorescens subsp. cellulosa).